Reading from the N-terminus, the 159-residue chain is Succinate dehydrogenase [ubiquinone] cytochrome b small subunit, mitochondrial (159 aa).

The N-terminal 56 residues, 1-56 (MAVLWRLSAVCGALGGRALLLRTPVVRPAHISAFLQDRPIPEWCGVQHIHLSPSHH), are a transit peptide targeting the mitochondrion. Topologically, residues 57–63 (SGSKAAS) are mitochondrial matrix. The helical transmembrane segment at 64 to 85 (LHWTSERVVSVLLLGLLPAAYL) threads the bilayer. Residues 86–90 (NPCSA) lie on the Mitochondrial intermembrane side of the membrane. The chain crosses the membrane as a helical span at residues 91-111 (MDYSLAAALTLHGHWGLGQVV). His102 provides a ligand contact to heme b. Residues 112 to 122 (TDYVHGDALQK) are Mitochondrial matrix-facing. Tyr114 provides a ligand contact to a ubiquinone. A helical transmembrane segment spans residues 123–144 (AAKAGLLALSALTFAGLCYFNY). The Mitochondrial intermembrane portion of the chain corresponds to 145-159 (HDVGICKAVAMLWKL).

It belongs to the CybS family. Component of complex II composed of four subunits: the flavoprotein (FP) SDHA, iron-sulfur protein (IP) SDHB, and a cytochrome b560 composed of SDHC and SDHD.

The protein localises to the mitochondrion inner membrane. The protein operates within carbohydrate metabolism; tricarboxylic acid cycle. Its function is as follows. Membrane-anchoring subunit of succinate dehydrogenase (SDH) that is involved in complex II of the mitochondrial electron transport chain and is responsible for transferring electrons from succinate to ubiquinone (coenzyme Q). SDH also oxidizes malate to the non-canonical enol form of oxaloacetate, enol-oxaloacetate. Enol-oxaloacetate, which is a potent inhibitor of the succinate dehydrogenase activity, is further isomerized into keto-oxaloacetate. The chain is Succinate dehydrogenase [ubiquinone] cytochrome b small subunit, mitochondrial (SDHD) from Homo sapiens (Human).